The primary structure comprises 324 residues: Protein SRC2 homolog (324 aa).

The region spanning 1–111 (MECRSLDLTI…LDQNKGDEEK (111 aa)) is the C2 domain. At 1 to 279 (MECRSLDLTI…KPQKPKKHGK (279 aa)) the chain is on the cytoplasmic side. Residues 141–281 (GSSSGPHAPV…QKPKKHGKAG (141 aa)) are disordered. Composition is skewed to low complexity over residues 166–175 (YPPGHGAPSA) and 246–269 (PYGY…QAHG). Over residues 270-279 (KPQKPKKHGK) the composition is skewed to basic residues. The chain crosses the membrane as a helical; Signal-anchor span at residues 280-300 (AGAGMGLGLGLGAGLLGGLLV). Topologically, residues 301–324 (GEAVSDIADMGDMGDMGDMGGFDF) are lumenal.

In terms of assembly, interacts with RBOHF (via N-terminus).

It localises to the endoplasmic reticulum membrane. It is found in the protein storage vacuole membrane. The protein resides in the cell membrane. In terms of biological role, may act as an activator of the calcium-dependent activation of RBOHF that mediates reactive oxygen species (ROS) production and may play a role in cold responses. This is Protein SRC2 homolog from Arabidopsis thaliana (Mouse-ear cress).